The following is a 211-amino-acid chain: Protein-L-isoaspartate O-methyltransferase (211 aa).

The active site involves Ser-62.

The protein belongs to the methyltransferase superfamily. L-isoaspartyl/D-aspartyl protein methyltransferase family.

Its subcellular location is the cytoplasm. The catalysed reaction is [protein]-L-isoaspartate + S-adenosyl-L-methionine = [protein]-L-isoaspartate alpha-methyl ester + S-adenosyl-L-homocysteine. Its function is as follows. Catalyzes the methyl esterification of L-isoaspartyl residues in peptides and proteins that result from spontaneous decomposition of normal L-aspartyl and L-asparaginyl residues. It plays a role in the repair and/or degradation of damaged proteins. The polypeptide is Protein-L-isoaspartate O-methyltransferase (Shewanella loihica (strain ATCC BAA-1088 / PV-4)).